The sequence spans 164 residues: ATP synthase subunit b (164 aa).

Residues 6–26 form a helical membrane-spanning segment; the sequence is GELVGNFILVTGSVIVLLLLI.

This sequence belongs to the ATPase B chain family. In terms of assembly, F-type ATPases have 2 components, F(1) - the catalytic core - and F(0) - the membrane proton channel. F(1) has five subunits: alpha(3), beta(3), gamma(1), delta(1), epsilon(1). F(0) has three main subunits: a(1), b(2) and c(10-14). The alpha and beta chains form an alternating ring which encloses part of the gamma chain. F(1) is attached to F(0) by a central stalk formed by the gamma and epsilon chains, while a peripheral stalk is formed by the delta and b chains.

The protein resides in the cell membrane. Functionally, f(1)F(0) ATP synthase produces ATP from ADP in the presence of a proton or sodium gradient. F-type ATPases consist of two structural domains, F(1) containing the extramembraneous catalytic core and F(0) containing the membrane proton channel, linked together by a central stalk and a peripheral stalk. During catalysis, ATP synthesis in the catalytic domain of F(1) is coupled via a rotary mechanism of the central stalk subunits to proton translocation. Component of the F(0) channel, it forms part of the peripheral stalk, linking F(1) to F(0). The polypeptide is ATP synthase subunit b (Streptococcus pyogenes serotype M6 (strain ATCC BAA-946 / MGAS10394)).